Here is a 101-residue protein sequence, read N- to C-terminus: Urease subunit beta (101 aa).

It belongs to the urease beta subunit family. Heterotrimer of UreA (gamma), UreB (beta) and UreC (alpha) subunits. Three heterotrimers associate to form the active enzyme.

It is found in the cytoplasm. It carries out the reaction urea + 2 H2O + H(+) = hydrogencarbonate + 2 NH4(+). The protein operates within nitrogen metabolism; urea degradation; CO(2) and NH(3) from urea (urease route): step 1/1. The chain is Urease subunit beta from Pseudomonas aeruginosa (strain LESB58).